The following is a 418-amino-acid chain: 3-isopropylmalate dehydratase large subunit (418 aa).

[4Fe-4S] cluster contacts are provided by C298, C358, and C361.

This sequence belongs to the aconitase/IPM isomerase family. LeuC type 2 subfamily. As to quaternary structure, heterodimer of LeuC and LeuD. [4Fe-4S] cluster is required as a cofactor.

It carries out the reaction (2R,3S)-3-isopropylmalate = (2S)-2-isopropylmalate. It functions in the pathway amino-acid biosynthesis; L-leucine biosynthesis; L-leucine from 3-methyl-2-oxobutanoate: step 2/4. In terms of biological role, catalyzes the isomerization between 2-isopropylmalate and 3-isopropylmalate, via the formation of 2-isopropylmaleate. The chain is 3-isopropylmalate dehydratase large subunit from Caldanaerobacter subterraneus subsp. tengcongensis (strain DSM 15242 / JCM 11007 / NBRC 100824 / MB4) (Thermoanaerobacter tengcongensis).